The primary structure comprises 632 residues: Polynucleotide 5'-hydroxyl-kinase GRC3 (632 aa).

The disordered stretch occupies residues 1–42 (MVIDSKQDLPQYTKDSGSESDSDSSNNFIVESPSIPSSKSAT). Residues 26–42 (NNFIVESPSIPSSKSAT) are compositionally biased toward polar residues. 246-253 (GGKNSGKS) provides a ligand contact to ATP.

Belongs to the Clp1 family. NOL9/GRC3 subfamily.

It is found in the nucleus. The protein resides in the nucleolus. Its function is as follows. Polynucleotide 5'-kinase involved in rRNA processing. Required for the efficient termination by RNA polymerase I and the processing of the IST2 pre-rRNA internal transcribed spacer localized between the 5.8S and 25S rRNAs. May act by maintaining the phosphorylated status of the downstream RNT1 cleavage product, which in turn allows the torpedo activity of RAT1 to efficiently terminate Pol I transcription. In vitro, displays polynucleotide kinase activity on both single- and double-stranded RNA and on single-stranded DNA alone, but not double-stranded DNA alone. This Saccharomyces cerevisiae (strain ATCC 204508 / S288c) (Baker's yeast) protein is Polynucleotide 5'-hydroxyl-kinase GRC3 (GRC3).